The sequence spans 265 residues: Orotidine 5'-phosphate decarboxylase (265 aa).

Substrate-binding positions include Asp-37, Lys-59–His-61, Asp-91–Thr-100, Tyr-217, and Arg-236. Residue Lys-93 is the Proton donor of the active site.

Belongs to the OMP decarboxylase family.

It catalyses the reaction orotidine 5'-phosphate + H(+) = UMP + CO2. It functions in the pathway pyrimidine metabolism; UMP biosynthesis via de novo pathway; UMP from orotate: step 2/2. The chain is Orotidine 5'-phosphate decarboxylase (URA3) from Saccharomycopsis fibuligera (Yeast).